Reading from the N-terminus, the 339-residue chain is Glucokinase (339 aa).

ATP is bound at residue 16-21; it reads GDIGGT.

The protein belongs to the bacterial glucokinase family.

It is found in the cytoplasm. It catalyses the reaction D-glucose + ATP = D-glucose 6-phosphate + ADP + H(+). In Rhizobium meliloti (strain 1021) (Ensifer meliloti), this protein is Glucokinase.